Consider the following 101-residue polypeptide: MAKVSAVNKNNKRIKLSDRLFKKRQALKKIVMDKKISLEERFKAQQKLSNLPRNSAKNRVMNRCQITGRPHGVYRKLKISRIALRDLGLHGLIPGMTKSSW.

It belongs to the universal ribosomal protein uS14 family. As to quaternary structure, part of the 30S ribosomal subunit. Contacts proteins S3 and S10.

In terms of biological role, binds 16S rRNA, required for the assembly of 30S particles and may also be responsible for determining the conformation of the 16S rRNA at the A site. The chain is Small ribosomal subunit protein uS14 from Pelagibacter ubique (strain HTCC1062).